We begin with the raw amino-acid sequence, 489 residues long: Adenylosuccinate synthetase 2, chloroplastic (489 aa).

Residues 1–45 constitute a chloroplast transit peptide; sequence MPFSPPCLDPAAAAAASLSFLPAAAARPPAPCAVAPRSRRALRVA. Residues 76–82 and 104–106 contribute to the GTP site; these read GDEGKGK and GHT. D77 (proton acceptor) is an active-site residue. Residues D77 and G104 each contribute to the Mg(2+) site. Residues 77 to 80, 102 to 105, T194, R208, Q288, T303, and R367 each bind IMP; these read DEGK and NAGH. The active-site Proton donor is the H105. Substrate is bound at residue 363 to 369; sequence TTTGRPR. GTP is bound by residues R369, 395 to 397, and 478 to 480; these read KLD and GVG.

The protein belongs to the adenylosuccinate synthetase family. As to quaternary structure, homodimer. Mg(2+) serves as cofactor.

The protein localises to the plastid. It is found in the chloroplast. The catalysed reaction is IMP + L-aspartate + GTP = N(6)-(1,2-dicarboxyethyl)-AMP + GDP + phosphate + 2 H(+). Its pathway is purine metabolism; AMP biosynthesis via de novo pathway; AMP from IMP: step 1/2. Its function is as follows. Plays an important role in the de novo pathway and in the salvage pathway of purine nucleotide biosynthesis. Catalyzes the first committed step in the biosynthesis of AMP from IMP. This is Adenylosuccinate synthetase 2, chloroplastic from Oryza sativa subsp. japonica (Rice).